The sequence spans 60 residues: Light-harvesting protein B-800/850 alpha chain (60 aa).

Over 1–14 the chain is Cytoplasmic; the sequence is MNNAKIWTVVKPST. Residues 15–35 form a helical membrane-spanning segment; the sequence is GIPLILGAVAVAALIVHAGLL. Residue H31 coordinates a bacteriochlorophyll. At 36–60 the chain is on the periplasmic side; that stretch reads TNTTWFANYWNGNPMATVVAVAPAQ.

This sequence belongs to the antenna complex alpha subunit family. The core complex is formed by different alpha and beta chains, binding bacteriochlorophyll molecules, and arranged most probably in tetrameric structures disposed around the reaction center. The non-pigmented gamma chains may constitute additional components.

It localises to the cell inner membrane. Its function is as follows. Antenna complexes are light-harvesting systems, which transfer the excitation energy to the reaction centers. The polypeptide is Light-harvesting protein B-800/850 alpha chain (pucA) (Rhodobacter capsulatus (Rhodopseudomonas capsulata)).